Here is a 536-residue protein sequence, read N- to C-terminus: Major facilitator superfamily domain-containing protein 4B (536 aa).

The next 12 helical transmembrane spans lie at 19–39 (LTYW…GPTI), 53–73 (ITWV…SGGA), 81–101 (ALLA…IIPL), 105–125 (VLLL…IDTI), 140–160 (IFLQ…PLIA), 211–231 (YAFW…FVLM), 297–317 (FFLI…IMGV), 341–361 (LNCI…PLSY), 366–386 (VHLL…LMIL), 391–411 (VFLF…FPCL), 428–448 (VLVT…GTLI), and 456–476 (FLVC…SVIL).

The protein belongs to the major facilitator superfamily.

It is found in the membrane. This chain is Major facilitator superfamily domain-containing protein 4B, found in Danio rerio (Zebrafish).